The sequence spans 407 residues: Protein trichome birefringence-like 12 (407 aa).

Residues 21–41 traverse the membrane as a helical; Signal-anchor for type II membrane protein segment; the sequence is SLLPRILLLSLLLLLFYSLIL. Positions 130 to 132 match the GDS motif motif; that stretch reads GDS. Residues 379–393 carry the DCXHWCLPGXXDXWN motif motif; the sequence is DCMHWCLPGVPDTWV.

This sequence belongs to the PC-esterase family. TBL subfamily.

The protein localises to the membrane. In terms of biological role, may act as a bridging protein that binds pectin and other cell wall polysaccharides. Probably involved in maintaining esterification of pectins. May be involved in the specific O-acetylation of cell wall polymers. This is Protein trichome birefringence-like 12 (TBL12) from Arabidopsis thaliana (Mouse-ear cress).